The sequence spans 757 residues: Probable tRNA (uracil-O(2)-)-methyltransferase (757 aa).

Disordered regions lie at residues 55–93 (EARG…GPEQ) and 108–138 (QQEE…GDFP). Residues 72–84 (PGPGQGSPGGGPG) are compositionally biased toward gly residues. A Phosphoserine modification is found at Ser78. Residues 123–136 (DSGHPGHAEGREGD) are compositionally biased toward basic and acidic residues. Ser533 carries the post-translational modification Phosphoserine. A C3H1-type zinc finger spans residues 713–743 (ACKTRLCWFFMHHPDGCALSTDCCPFAHGPA).

The protein belongs to the TRM44 family.

Its subcellular location is the cytoplasm. It catalyses the reaction uridine(44) in tRNA(Ser) + S-adenosyl-L-methionine = 2'-O-methyluridine(44) in tRNA(Ser) + S-adenosyl-L-homocysteine + H(+). Functionally, probable adenosyl-L-methionine (AdoMet)-dependent tRNA (uracil-O(2)-)-methyltransferase. In Homo sapiens (Human), this protein is Probable tRNA (uracil-O(2)-)-methyltransferase (TRMT44).